The sequence spans 331 residues: Ketol-acid reductoisomerase (NADP(+)) (331 aa).

The 181-residue stretch at 2 to 182 folds into the KARI N-terminal Rossmann domain; it reads AQLFYDSDAD…GGTRAGILET (181 aa). NADP(+) contacts are provided by residues 25–28, Ser51, Ser53, and 83–86; these read YGSQ and DEFQ. His108 is an active-site residue. Residue Gly134 participates in NADP(+) binding. Residues 183–328 form the KARI C-terminal knotted domain; the sequence is NFKEETETDL…KGLRSMFSWL (146 aa). Mg(2+) contacts are provided by Asp191, Glu195, Glu227, and Glu231. Ser252 lines the substrate pocket.

The protein belongs to the ketol-acid reductoisomerase family. Mg(2+) serves as cofactor.

The enzyme catalyses (2R)-2,3-dihydroxy-3-methylbutanoate + NADP(+) = (2S)-2-acetolactate + NADPH + H(+). It catalyses the reaction (2R,3R)-2,3-dihydroxy-3-methylpentanoate + NADP(+) = (S)-2-ethyl-2-hydroxy-3-oxobutanoate + NADPH + H(+). It participates in amino-acid biosynthesis; L-isoleucine biosynthesis; L-isoleucine from 2-oxobutanoate: step 2/4. Its pathway is amino-acid biosynthesis; L-valine biosynthesis; L-valine from pyruvate: step 2/4. Involved in the biosynthesis of branched-chain amino acids (BCAA). Catalyzes an alkyl-migration followed by a ketol-acid reduction of (S)-2-acetolactate (S2AL) to yield (R)-2,3-dihydroxy-isovalerate. In the isomerase reaction, S2AL is rearranged via a Mg-dependent methyl migration to produce 3-hydroxy-3-methyl-2-ketobutyrate (HMKB). In the reductase reaction, this 2-ketoacid undergoes a metal-dependent reduction by NADPH to yield (R)-2,3-dihydroxy-isovalerate. This Synechococcus sp. (strain CC9902) protein is Ketol-acid reductoisomerase (NADP(+)).